We begin with the raw amino-acid sequence, 92 residues long: Small ribosomal subunit protein uS19c (92 aa).

It belongs to the universal ribosomal protein uS19 family.

It localises to the plastid. The protein resides in the chloroplast. Functionally, protein S19 forms a complex with S13 that binds strongly to the 16S ribosomal RNA. This is Small ribosomal subunit protein uS19c from Gracilaria tenuistipitata var. liui (Red alga).